The sequence spans 213 residues: Uracil phosphoribosyltransferase (213 aa).

5-phospho-alpha-D-ribose 1-diphosphate is bound by residues arginine 78, arginine 103, and 131 to 139; that span reads DPMLATGGT. Residues isoleucine 197 and 202-204 contribute to the uracil site; that span reads GDA. Position 203 (aspartate 203) interacts with 5-phospho-alpha-D-ribose 1-diphosphate.

It belongs to the UPRTase family. It depends on Mg(2+) as a cofactor.

The enzyme catalyses UMP + diphosphate = 5-phospho-alpha-D-ribose 1-diphosphate + uracil. It functions in the pathway pyrimidine metabolism; UMP biosynthesis via salvage pathway; UMP from uracil: step 1/1. Allosterically activated by GTP. In terms of biological role, catalyzes the conversion of uracil and 5-phospho-alpha-D-ribose 1-diphosphate (PRPP) to UMP and diphosphate. This Bifidobacterium animalis subsp. lactis (strain AD011) protein is Uracil phosphoribosyltransferase.